Reading from the N-terminus, the 114-residue chain is Large ribosomal subunit protein uL22c (114 aa).

The protein belongs to the universal ribosomal protein uL22 family. As to quaternary structure, part of the 50S ribosomal subunit.

Its subcellular location is the plastid. It localises to the cyanelle. In terms of biological role, this protein binds specifically to 23S rRNA. Its function is as follows. The globular domain of the protein is located near the polypeptide exit tunnel on the outside of the subunit, while an extended beta-hairpin is found that lines the wall of the exit tunnel in the center of the 70S ribosome. The protein is Large ribosomal subunit protein uL22c (rpl22) of Cyanophora paradoxa.